We begin with the raw amino-acid sequence, 103 residues long: Large ribosomal subunit protein uL24 (103 aa).

The protein belongs to the universal ribosomal protein uL24 family. As to quaternary structure, part of the 50S ribosomal subunit.

Its function is as follows. One of two assembly initiator proteins, it binds directly to the 5'-end of the 23S rRNA, where it nucleates assembly of the 50S subunit. In terms of biological role, one of the proteins that surrounds the polypeptide exit tunnel on the outside of the subunit. The polypeptide is Large ribosomal subunit protein uL24 (rplX) (Bacillus spizizenii (strain ATCC 23059 / NRRL B-14472 / W23) (Bacillus subtilis subsp. spizizenii)).